A 586-amino-acid chain; its full sequence is Thioredoxin domain-containing protein 3 (586 aa).

Positions 10 to 116 (LQSVVNSQNL…NRKVITLIDE (107 aa)) constitute a Thioredoxin domain. Cys-39 and Cys-42 are disulfide-bonded. 3 NDK regions span residues 157–254 (MAII…VLEE), 312–452 (VQTT…STLA), and 453–586 (LIKP…NPEN).

The protein in the C-terminal section; belongs to the NDK family. As to quaternary structure, monomer. As to expression, testis-specific. Expressed mainly in round spermatids.

Its subcellular location is the cytoplasm. Functionally, probably required during the final stages of sperm tail maturation in the testis and/or epididymis, where extensive disulfide bonding of fibrous sheath (FS) proteins occurs. In vitro, it has neither nucleoside diphosphate kinase (NDPK) activity nor reducing activity on disulfide bonds. Exhibits a 3'-5' exonuclease activity with a preference for single-stranded DNA, suggesting roles in DNA proofreading and repair. The polypeptide is Thioredoxin domain-containing protein 3 (Nme8) (Mus musculus (Mouse)).